Reading from the N-terminus, the 392-residue chain is Formate-dependent phosphoribosylglycinamide formyltransferase (392 aa).

N(1)-(5-phospho-beta-D-ribosyl)glycinamide contacts are provided by residues 22–23 (EL) and glutamate 82. ATP contacts are provided by residues arginine 114, lysine 155, 160–165 (SSGKGQ), 195–198 (EGVV), and glutamate 203. One can recognise an ATP-grasp domain in the interval 119–308 (RLAAEELQLP…EFALHVRAFL (190 aa)). 2 residues coordinate Mg(2+): glutamate 267 and glutamate 279. N(1)-(5-phospho-beta-D-ribosyl)glycinamide is bound by residues aspartate 286, lysine 355, and 362–363 (RR).

The protein belongs to the PurK/PurT family. In terms of assembly, homodimer.

It carries out the reaction N(1)-(5-phospho-beta-D-ribosyl)glycinamide + formate + ATP = N(2)-formyl-N(1)-(5-phospho-beta-D-ribosyl)glycinamide + ADP + phosphate + H(+). Its pathway is purine metabolism; IMP biosynthesis via de novo pathway; N(2)-formyl-N(1)-(5-phospho-D-ribosyl)glycinamide from N(1)-(5-phospho-D-ribosyl)glycinamide (formate route): step 1/1. Its function is as follows. Involved in the de novo purine biosynthesis. Catalyzes the transfer of formate to 5-phospho-ribosyl-glycinamide (GAR), producing 5-phospho-ribosyl-N-formylglycinamide (FGAR). Formate is provided by PurU via hydrolysis of 10-formyl-tetrahydrofolate. This chain is Formate-dependent phosphoribosylglycinamide formyltransferase, found in Shigella flexneri.